A 541-amino-acid chain; its full sequence is Synaptotagmin-1 (541 aa).

Topologically, residues 1-11 (MGFFSTILGFC) are extracellular. The chain crosses the membrane as a helical span at residues 12–32 (GFGVGISLGLVIGYVLFVYLL). The Cytoplasmic segment spans residues 33-541 (PNDVKDPEIR…QIELEWRTAS (509 aa)). The SMP-LTD domain maps to 67–249 (DFDRVDWINR…WPKTLVVPIL (183 aa)). A phospholipid binding region spans residues 227–509 (QEQIKDQVAN…TLGYVDIPVV (283 aa)). 2 consecutive C2 domains span residues 240 to 362 (WPKT…AFTL) and 401 to 521 (GFEE…NQKF). Ca(2+)-binding residues include Asp-276, Asp-282, Asp-332, and Glu-334.

Belongs to the synaptotagmin family. As to quaternary structure, interacts with cabbage leaf curl virus (CaLCuV) BC1 protein and tobacco mosaic virus (TMV) MP protein. Interacts with ROSY1. It depends on Ca(2+) as a cofactor. As to expression, expressed in roots, shoots, rosette and cauline leaves, inflorescences, and siliques. In roots, expressed in vascular bundle, epidermis, the differential zone of the tips of root hairs, and the quiescent center and columella of root tips.

The protein resides in the cell membrane. It is found in the endosome membrane. Plays an important role in maintaining plasma membrane integrity during freezing and osmotic stresses. May function in membrane resealing during calcium-dependent freezing tolerance. May regulate endocytosis and endosome recycling at the plasma membrane and cell-to-cell trafficking of cabbage leaf curl virus (CaLCuV) and tobacco mosaic virus (TMV) movement proteins via plasmodesmata. The sequence is that of Synaptotagmin-1 (SYT1) from Arabidopsis thaliana (Mouse-ear cress).